Consider the following 705-residue polypeptide: Translation initiation factor IF-2 (705 aa).

A disordered region spans residues 40–124 (DDQIKALDKK…QPAAPKEIPS (85 aa)). A compositionally biased stretch (basic and acidic residues) spans 41-58 (DQIKALDKKFKKEQKNDN). Over residues 59–77 (KQSTQNNHQKSNNQNQNKG) the composition is skewed to low complexity. Positions 94-108 (KGNKKNNRNNKKNNK) are enriched in basic residues. Residues 207–376 (ERPAVVTIMG…GLVAEVQELK (170 aa)) form the tr-type G domain. The G1 stretch occupies residues 216-223 (GHVDHGKT). 216–223 (GHVDHGKT) serves as a coordination point for GTP. A G2 region spans residues 241–245 (GITQH). Residues 262-265 (DTPG) are G3. Residues 262-266 (DTPGH) and 316-319 (NKID) contribute to the GTP site. The segment at 316-319 (NKID) is G4. The interval 352–354 (SAL) is G5.

The protein belongs to the TRAFAC class translation factor GTPase superfamily. Classic translation factor GTPase family. IF-2 subfamily.

Its subcellular location is the cytoplasm. Its function is as follows. One of the essential components for the initiation of protein synthesis. Protects formylmethionyl-tRNA from spontaneous hydrolysis and promotes its binding to the 30S ribosomal subunits. Also involved in the hydrolysis of GTP during the formation of the 70S ribosomal complex. The protein is Translation initiation factor IF-2 of Staphylococcus aureus (strain MRSA252).